Reading from the N-terminus, the 373-residue chain is Type 2 DNA topoisomerase 6 subunit A (373 aa).

The region spanning 15 to 153 is the Topo IIA-type catalytic domain; sequence QGDTLAKERL…FHMRPEEDGA (139 aa). Residue Tyr-110 is the O-(5'-phospho-DNA)-tyrosine intermediate of the active site. Glu-206 and Asp-258 together coordinate Mg(2+).

Belongs to the TOP6A family. Homodimer. Heterotetramer of two Top6A and two Top6B chains. Mg(2+) is required as a cofactor.

The enzyme catalyses ATP-dependent breakage, passage and rejoining of double-stranded DNA.. Functionally, relaxes both positive and negative superturns and exhibits a strong decatenase activity. The polypeptide is Type 2 DNA topoisomerase 6 subunit A (Methanosarcina acetivorans (strain ATCC 35395 / DSM 2834 / JCM 12185 / C2A)).